The sequence spans 696 residues: Elongation factor G (696 aa).

A tr-type G domain is found at 8-290; it reads ERYRNIGIMA…AVLDYLPSPL (283 aa). GTP contacts are provided by residues 17 to 24, 88 to 92, and 142 to 145; these read AHIDAGKT, DTPGH, and NKMD.

The protein belongs to the TRAFAC class translation factor GTPase superfamily. Classic translation factor GTPase family. EF-G/EF-2 subfamily.

Its subcellular location is the cytoplasm. Its function is as follows. Catalyzes the GTP-dependent ribosomal translocation step during translation elongation. During this step, the ribosome changes from the pre-translocational (PRE) to the post-translocational (POST) state as the newly formed A-site-bound peptidyl-tRNA and P-site-bound deacylated tRNA move to the P and E sites, respectively. Catalyzes the coordinated movement of the two tRNA molecules, the mRNA and conformational changes in the ribosome. This chain is Elongation factor G, found in Nitrosomonas eutropha (strain DSM 101675 / C91 / Nm57).